Reading from the N-terminus, the 452-residue chain is GTPase Der (452 aa).

2 consecutive EngA-type G domains span residues K9–D170 and L185–N362. GTP-binding positions include G15–S22, D62–L66, N124–E127, G191–S198, D238–L242, and N303–D306. The KH-like domain occupies K363 to K448.

The protein belongs to the TRAFAC class TrmE-Era-EngA-EngB-Septin-like GTPase superfamily. EngA (Der) GTPase family. Associates with the 50S ribosomal subunit.

GTPase that plays an essential role in the late steps of ribosome biogenesis. In Rickettsia bellii (strain RML369-C), this protein is GTPase Der.